Reading from the N-terminus, the 574-residue chain is ATP-dependent RNA helicase RhlB (574 aa).

Positions 9 to 37 (VTFSSFDLHPALVAGLESAGFTRCTPIQA) match the Q motif motif. The 181-residue stretch at 40 to 220 (LPVALPGGDV…YEHMNEPEKL (181 aa)) folds into the Helicase ATP-binding domain. Residue 53-60 (AQTGTGKT) coordinates ATP. The DEAD box motif lies at 166–169 (DEAD). A Helicase C-terminal domain is found at 231 to 393 (RVRQRIYFPS…PVTSELLTPL (163 aa)). A compositionally biased stretch (basic and acidic residues) spans 423-432 (EQRAAEEQRR). Residues 423–574 (EQRAAEEQRR…RRLRSLVSGN (152 aa)) form a disordered region. Positions 435 to 449 (GRSGPGGGSRSGSGG) are enriched in gly residues. Residues 477-495 (AAAAQTEKPVVAAAAAQAP) are compositionally biased toward low complexity. The span at 506–515 (PRKRRRRRNG) shows a compositional bias: basic residues. Low complexity-rich tracts occupy residues 523-535 (PAVA…APAA) and 553-562 (SSGSPSLLGR).

This sequence belongs to the DEAD box helicase family. RhlB subfamily. In terms of assembly, component of the RNA degradosome, which is a multiprotein complex involved in RNA processing and mRNA degradation.

Its subcellular location is the cytoplasm. It catalyses the reaction ATP + H2O = ADP + phosphate + H(+). Its function is as follows. DEAD-box RNA helicase involved in RNA degradation. Has RNA-dependent ATPase activity and unwinds double-stranded RNA. The chain is ATP-dependent RNA helicase RhlB from Xanthomonas oryzae pv. oryzae (strain KACC10331 / KXO85).